A 460-amino-acid chain; its full sequence is Bifunctional protein GlmU (460 aa).

The interval 1 to 229 (MTNYAIILAA…FNESLGVNDR (229 aa)) is pyrophosphorylase. UDP-N-acetyl-alpha-D-glucosamine is bound by residues 8-11 (LAAG), K22, Q72, and 77-78 (GT). D102 serves as a coordination point for Mg(2+). 4 residues coordinate UDP-N-acetyl-alpha-D-glucosamine: G139, E154, N169, and N227. N227 serves as a coordination point for Mg(2+). The linker stretch occupies residues 230-250 (VALATAETVMRQRITQKHMVN). Residues 251–460 (GVTFQNPETV…RLAHHPSRSK (210 aa)) form an N-acetyltransferase region. Residues R332 and K350 each contribute to the UDP-N-acetyl-alpha-D-glucosamine site. Catalysis depends on H362, which acts as the Proton acceptor. Positions 365 and 376 each coordinate UDP-N-acetyl-alpha-D-glucosamine. Acetyl-CoA-binding positions include A379, 385–386 (NY), S404, A422, and R439.

This sequence in the N-terminal section; belongs to the N-acetylglucosamine-1-phosphate uridyltransferase family. The protein in the C-terminal section; belongs to the transferase hexapeptide repeat family. In terms of assembly, homotrimer. Mg(2+) serves as cofactor.

The protein resides in the cytoplasm. It catalyses the reaction alpha-D-glucosamine 1-phosphate + acetyl-CoA = N-acetyl-alpha-D-glucosamine 1-phosphate + CoA + H(+). The catalysed reaction is N-acetyl-alpha-D-glucosamine 1-phosphate + UTP + H(+) = UDP-N-acetyl-alpha-D-glucosamine + diphosphate. The protein operates within nucleotide-sugar biosynthesis; UDP-N-acetyl-alpha-D-glucosamine biosynthesis; N-acetyl-alpha-D-glucosamine 1-phosphate from alpha-D-glucosamine 6-phosphate (route II): step 2/2. Its pathway is nucleotide-sugar biosynthesis; UDP-N-acetyl-alpha-D-glucosamine biosynthesis; UDP-N-acetyl-alpha-D-glucosamine from N-acetyl-alpha-D-glucosamine 1-phosphate: step 1/1. It participates in bacterial outer membrane biogenesis; LPS lipid A biosynthesis. Its function is as follows. Catalyzes the last two sequential reactions in the de novo biosynthetic pathway for UDP-N-acetylglucosamine (UDP-GlcNAc). The C-terminal domain catalyzes the transfer of acetyl group from acetyl coenzyme A to glucosamine-1-phosphate (GlcN-1-P) to produce N-acetylglucosamine-1-phosphate (GlcNAc-1-P), which is converted into UDP-GlcNAc by the transfer of uridine 5-monophosphate (from uridine 5-triphosphate), a reaction catalyzed by the N-terminal domain. The polypeptide is Bifunctional protein GlmU (Streptococcus pyogenes serotype M5 (strain Manfredo)).